The following is a 291-amino-acid chain: Acetylglutamate kinase (291 aa).

Substrate is bound by residues Gly-65–Gly-66, Arg-87, and Asn-186.

Belongs to the acetylglutamate kinase family. ArgB subfamily.

The protein resides in the cytoplasm. It catalyses the reaction N-acetyl-L-glutamate + ATP = N-acetyl-L-glutamyl 5-phosphate + ADP. Its pathway is amino-acid biosynthesis; L-arginine biosynthesis; N(2)-acetyl-L-ornithine from L-glutamate: step 2/4. Catalyzes the ATP-dependent phosphorylation of N-acetyl-L-glutamate. This chain is Acetylglutamate kinase, found in Mycolicibacterium vanbaalenii (strain DSM 7251 / JCM 13017 / BCRC 16820 / KCTC 9966 / NRRL B-24157 / PYR-1) (Mycobacterium vanbaalenii).